Consider the following 538-residue polypeptide: Putative ABC1 protein At2g40090 (538 aa).

A signal peptide spans 1-26; the sequence is MAARSLWRTRTKLLVVGTALCGGSGA.

The protein belongs to the protein kinase superfamily. ADCK protein kinase family.

This is Putative ABC1 protein At2g40090 from Arabidopsis thaliana (Mouse-ear cress).